Reading from the N-terminus, the 88-residue chain is Small ribosomal subunit protein bS20 (88 aa).

This sequence belongs to the bacterial ribosomal protein bS20 family.

Its function is as follows. Binds directly to 16S ribosomal RNA. The protein is Small ribosomal subunit protein bS20 of Bradyrhizobium sp. (strain BTAi1 / ATCC BAA-1182).